Reading from the N-terminus, the 660-residue chain is MSIKIQQEIEDLKKLIRKWDKEYYVDSLPSVEDFVYDNHILRLKELESRHPEYKTLDSPTLKFGSDLLNNFEEVEHSVPILSLDKVYDLDLLKSWIDKIDFNNSFNISVEPKIDGCSIVLYYKDGILEKALTRGNGKFGNDVTKNIRTIRHIPLFLDEKVDLVLRGEVYITKENFFKINKFLEKPYTSSRNLASGILRRVDSREVANFPLNIFIYDFLNAELELKTNDLAIAKLKKLGFKVDPLIRFFDQKSSIIEVLNYIADITKKRNSFEYEIDGVVLKVSEFVLREKLGYTSHHPKWAMAYKFEALSGFSRVNSIVVQVGRSGKITPVANIDKVFVSGAFITNATLHNQDYIISIGLNVGDVVKVSRRGDVIPAVEMVINKCSKGVFKVPDNCPACKTVLVKEGAHFFCTNNSCPSVAVERIKYFCSKNCMDIEGFSDKTISFLFEKEFISSEIDLYTFNFYKLLKFKGFKDRKVYNLINSIEASKKKPFSKLLLSIGIKELGENAIRLLFLNNLNSFSKLFRLCQDRNFAFSTLLKIKGIGEKIALNIIEAFNDSTMLNKFKFFENLGFKMEESILIDDENRLLAGKKFCITGTFNGYSRSIIIDKLKNKGAIFKTCVTEGLDFLIVGEKAGSKLEKALNLNVKIMSFEDIKSYLN.

Residues 33-37, 82-83, and E110 contribute to the NAD(+) site; these read DFVYD and SL. K112 serves as the catalytic N6-AMP-lysine intermediate. NAD(+) is bound by residues R133, E167, K281, and K305. The Zn(2+) site is built by C396, C399, C412, and C417. The region spanning 583 to 660 is the BRCT domain; the sequence is DENRLLAGKK…SFEDIKSYLN (78 aa).

It belongs to the NAD-dependent DNA ligase family. LigA subfamily. It depends on Mg(2+) as a cofactor. The cofactor is Mn(2+).

The catalysed reaction is NAD(+) + (deoxyribonucleotide)n-3'-hydroxyl + 5'-phospho-(deoxyribonucleotide)m = (deoxyribonucleotide)n+m + AMP + beta-nicotinamide D-nucleotide.. In terms of biological role, DNA ligase that catalyzes the formation of phosphodiester linkages between 5'-phosphoryl and 3'-hydroxyl groups in double-stranded DNA using NAD as a coenzyme and as the energy source for the reaction. It is essential for DNA replication and repair of damaged DNA. This is DNA ligase from Borrelia garinii subsp. bavariensis (strain ATCC BAA-2496 / DSM 23469 / PBi) (Borreliella bavariensis).